Here is a 387-residue protein sequence, read N- to C-terminus: Protein adenylyltransferase VopS (387 aa).

ATP contacts are provided by residues 76–77 (IT), 122–124 (LDS), 353–355 (GNG), and R359. One can recognise a Fido domain in the interval 278-387 (LNMDNLKELH…NAENSLHGIK (110 aa)).

The protein localises to the secreted. The catalysed reaction is L-tyrosyl-[protein] + ATP = O-(5'-adenylyl)-L-tyrosyl-[protein] + diphosphate. The enzyme catalyses L-threonyl-[protein] + ATP = 3-O-(5'-adenylyl)-L-threonyl-[protein] + diphosphate. Its function is as follows. Adenylyltransferase involved in virulence by mediating the addition of adenosine 5'-monophosphate (AMP) to specific threonine residue of host Rho GTPases RhoA, Rac and Cdc42. The resulting AMPylation prevents the interaction of Rho GTPases with downstream effectors, thereby inhibiting actin assembly in infected cells. This Vibrio parahaemolyticus serotype O3:K6 (strain RIMD 2210633) protein is Protein adenylyltransferase VopS (vopS).